The following is a 380-amino-acid chain: Homeobox protein ceh-6 (380 aa).

The segment covering 1 to 25 (MLIPSSSSIPSSLSASASDSEPSSL) has biased composition (low complexity). Disordered stretches follow at residues 1-31 (MLIP…SGIS), 167-190 (SGSV…SEQT), and 265-286 (GSPN…KKRT). The POU-specific domain occupies 187 to 261 (SEQTCPDDLE…LLFKWLEEAD (75 aa)). Positions 281–340 (KRKKRTSIEVNVKSRLEFHFQSNQKPNAQEITQVAMELQLEKEVVRVWFCNRRQKEKRIA) form a DNA-binding region, homeobox.

The protein belongs to the POU transcription factor family. Class-3 subfamily. Interacts with egl-27, sox-2 and sem-4. Interacts with wdr-5.1. As to expression, expressed in a series of neurons in the ring ganglia, excretory cell, dividing neuroblasts in the ventral cord and rectal cells.

The protein localises to the nucleus. Vital for embryonic development and essential for the proper function of the excretory cell. Required for the transdifferentiation of the Y rectal epithelial cell to the PDA motor neuron during larval development. The polypeptide is Homeobox protein ceh-6 (Caenorhabditis elegans).